A 253-amino-acid chain; its full sequence is Phycoerythrobilin:ferredoxin oxidoreductase (253 aa).

The protein belongs to the HY2 family.

It carries out the reaction (3Z)-phycoerythrobilin + oxidized 2[4Fe-4S]-[ferredoxin] = 15,16-dihydrobiliverdin + reduced 2[4Fe-4S]-[ferredoxin] + 2 H(+). Its function is as follows. Catalyzes the two-electron reduction of the C2 and C3(1) diene system of 15,16-dihydrobiliverdin. This is Phycoerythrobilin:ferredoxin oxidoreductase from Prochlorococcus marinus (strain AS9601).